We begin with the raw amino-acid sequence, 190 residues long: Protein GrpE (190 aa).

Residues 1–18 (MTETPNTSSEEIQTSEPS) are compositionally biased toward polar residues. Residues 1-21 (MTETPNTSSEEIQTSEPSPDN) form a disordered region.

It belongs to the GrpE family. In terms of assembly, homodimer.

It is found in the cytoplasm. Its function is as follows. Participates actively in the response to hyperosmotic and heat shock by preventing the aggregation of stress-denatured proteins, in association with DnaK and GrpE. It is the nucleotide exchange factor for DnaK and may function as a thermosensor. Unfolded proteins bind initially to DnaJ; upon interaction with the DnaJ-bound protein, DnaK hydrolyzes its bound ATP, resulting in the formation of a stable complex. GrpE releases ADP from DnaK; ATP binding to DnaK triggers the release of the substrate protein, thus completing the reaction cycle. Several rounds of ATP-dependent interactions between DnaJ, DnaK and GrpE are required for fully efficient folding. In Chlamydia trachomatis serovar A (strain ATCC VR-571B / DSM 19440 / HAR-13), this protein is Protein GrpE.